Here is a 926-residue protein sequence, read N- to C-terminus: Nitrate reductase [NADH] (926 aa).

Positions 1–85 are disordered; it reads MAASVDRQYH…SDSEEDDDEN (85 aa). The segment covering 36–46 has biased composition (polar residues); that stretch reads YTFSNPPSSNG. A compositionally biased stretch (low complexity) spans 58-73; it reads DNNSNSNNGSNNNNNR. Cys204 provides a ligand contact to Mo-molybdopterin. Residues 551-626 enclose the Cytochrome b5 heme-binding domain; it reads SKMYSMSEVK…LEDFRIGELI (76 aa). Positions 586 and 609 each coordinate heme. Residues 670–782 form the FAD-binding FR-type domain; that stretch reads RVKIPCKLIE…KGPLGHIEYL (113 aa). Residues 722–725, 739–743, Phe744, Phe751, 756–758, and Thr809 each bind FAD; these read RAYT, VVKVY, and VMS.

The protein belongs to the nitrate reductase family. As to quaternary structure, homodimer. The cofactor is FAD. Heme serves as cofactor. Requires Mo-molybdopterin as cofactor.

The enzyme catalyses nitrite + NAD(+) + H2O = nitrate + NADH + H(+). Nitrate reductase is a key enzyme involved in the first step of nitrate assimilation in plants, fungi and bacteria. This is Nitrate reductase [NADH] (NIA) from Spinacia oleracea (Spinach).